The chain runs to 152 residues: Ribonuclease H (152 aa).

In terms of domain architecture, RNase H type-1 spans 6–147 (KKNRVIAYTD…ADELANKAIA (142 aa)). 4 residues coordinate Mg(2+): D15, E53, D75, and D139.

It belongs to the RNase H family. In terms of assembly, monomer. Mg(2+) is required as a cofactor.

Its subcellular location is the cytoplasm. It catalyses the reaction Endonucleolytic cleavage to 5'-phosphomonoester.. In terms of biological role, endonuclease that specifically degrades the RNA of RNA-DNA hybrids. In Francisella tularensis subsp. tularensis (strain FSC 198), this protein is Ribonuclease H.